The chain runs to 461 residues: 23S rRNA (uracil(1939)-C(5))-methyltransferase RlmD (461 aa).

A disordered region spans residues 1–26 (MAKHERGLRFQPTGGSKAPQIPTGKK). Positions 20–78 (QIPTGKKQRLSIERLANDGRGIAFFEGKTWFVLGALAGEEVEARVLGAHGKVVEARTER) constitute a TRAM domain. [4Fe-4S] cluster is bound by residues Cys91, Cys97, Cys100, and Cys179. Gln283, Phe312, Asn317, Glu333, Asp360, and Asp381 together coordinate S-adenosyl-L-methionine. The active-site Nucleophile is the Cys407.

The protein belongs to the class I-like SAM-binding methyltransferase superfamily. RNA M5U methyltransferase family. RlmD subfamily.

It catalyses the reaction uridine(1939) in 23S rRNA + S-adenosyl-L-methionine = 5-methyluridine(1939) in 23S rRNA + S-adenosyl-L-homocysteine + H(+). Its function is as follows. Catalyzes the formation of 5-methyl-uridine at position 1939 (m5U1939) in 23S rRNA. The protein is 23S rRNA (uracil(1939)-C(5))-methyltransferase RlmD of Pseudomonas fluorescens (strain Pf0-1).